A 678-amino-acid polypeptide reads, in one-letter code: Glycine--tRNA ligase beta subunit (678 aa).

The protein belongs to the class-II aminoacyl-tRNA synthetase family. As to quaternary structure, tetramer of two alpha and two beta subunits.

Its subcellular location is the cytoplasm. The enzyme catalyses tRNA(Gly) + glycine + ATP = glycyl-tRNA(Gly) + AMP + diphosphate. This is Glycine--tRNA ligase beta subunit from Streptococcus pneumoniae (strain P1031).